The primary structure comprises 366 residues: MQPYQRLLALGFLLLTLPWGQTSEFQDSDLLQFLGLEKAPSPHRFQPVPRVLRKIIRAREAAAASGASQDLCYVKELGVRGNLLQLLPDQGFFLNTQKPFQDGSCLQKVLYFNLSAIKEKAKLTMAQLTLDLGPRSYYNLRPELVVALSVVQDRGVWGRSHPKVGRLLFLRSVPGPQGQLQFNLQGALKDWSSNRLKNLDLHLEILVKEDRYSRVTVQPENPCDRLLRSLHASLLVVTLNPKHCHPSSRKRRAAISVPKGFCRNFCHRHQLFINFQDLGWHKWVIAPKGFMANYCHGECPFSMTTYLNSSNYAFMQALMHMADPKVPKAVCVPTKLSPISMLYQDSDKNVILRHYEDMVVDECGCG.

A signal peptide spans 1 to 22; it reads MQPYQRLLALGFLLLTLPWGQT. A propeptide spanning residues 23 to 252 is cleaved from the precursor; sequence SEFQDSDLLQ…HCHPSSRKRR (230 aa). Asn113 and Asn308 each carry an N-linked (GlcNAc...) asparagine glycan. 3 disulfide bridges follow: Cys266/Cys331, Cys295/Cys363, and Cys299/Cys365.

This sequence belongs to the TGF-beta family. In terms of assembly, homodimer. Heterodimer (Potential). But, in contrast to other members of this family, cannot be disulfide-linked. In terms of processing, synthesized as large precursor molecule that undergo proteolytic cleavage, releasing the pro-domain from the active, receptor binding, C-terminal region of the molecule. In terms of tissue distribution, primarily in adult bone marrow, spleen, thymus and adipose tissue.

It is found in the secreted. The protein localises to the cytoplasm. Functionally, growth factor involved in early embryonic development and adipose-tissue homeostasis. During embryogenesis controls formation of anterior visceral endoderm and mesoderm and the establishment of anterior-posterior identity through a receptor complex comprising the receptor ACVR1B and the coreceptor CRIPTO. Regulates adipose-tissue homeostasis and energy balance under nutrient overload in part by signaling through the receptor complex based on ACVR1C and CRIPTO. This Mus musculus (Mouse) protein is Growth/differentiation factor 3 (Gdf3).